A 398-amino-acid polypeptide reads, in one-letter code: 1-deoxy-D-xylulose 5-phosphate reductoisomerase (398 aa).

Residues T11, G12, S13, I14, R38, N39, and N125 each contribute to the NADPH site. K126 is a binding site for 1-deoxy-D-xylulose 5-phosphate. E127 provides a ligand contact to NADPH. D151 serves as a coordination point for Mn(2+). S152, E153, S179, and H202 together coordinate 1-deoxy-D-xylulose 5-phosphate. A Mn(2+)-binding site is contributed by E153. G208 is a binding site for NADPH. Positions 215, 220, 221, and 224 each coordinate 1-deoxy-D-xylulose 5-phosphate. E224 provides a ligand contact to Mn(2+).

This sequence belongs to the DXR family. Mg(2+) serves as cofactor. It depends on Mn(2+) as a cofactor.

The enzyme catalyses 2-C-methyl-D-erythritol 4-phosphate + NADP(+) = 1-deoxy-D-xylulose 5-phosphate + NADPH + H(+). It functions in the pathway isoprenoid biosynthesis; isopentenyl diphosphate biosynthesis via DXP pathway; isopentenyl diphosphate from 1-deoxy-D-xylulose 5-phosphate: step 1/6. In terms of biological role, catalyzes the NADPH-dependent rearrangement and reduction of 1-deoxy-D-xylulose-5-phosphate (DXP) to 2-C-methyl-D-erythritol 4-phosphate (MEP). The chain is 1-deoxy-D-xylulose 5-phosphate reductoisomerase from Burkholderia lata (strain ATCC 17760 / DSM 23089 / LMG 22485 / NCIMB 9086 / R18194 / 383).